A 329-amino-acid chain; its full sequence is DNA-directed RNA polymerase subunit alpha (329 aa).

The interval 1–235 (MQGSVTEFLK…EQLEAFVDLR (235 aa)) is alpha N-terminal domain (alpha-NTD). The tract at residues 249-329 (FDPILLRPVD…NWPPASIADE (81 aa)) is alpha C-terminal domain (alpha-CTD).

The protein belongs to the RNA polymerase alpha chain family. In terms of assembly, homodimer. The RNAP catalytic core consists of 2 alpha, 1 beta, 1 beta' and 1 omega subunit. When a sigma factor is associated with the core the holoenzyme is formed, which can initiate transcription.

It catalyses the reaction RNA(n) + a ribonucleoside 5'-triphosphate = RNA(n+1) + diphosphate. Its function is as follows. DNA-dependent RNA polymerase catalyzes the transcription of DNA into RNA using the four ribonucleoside triphosphates as substrates. The polypeptide is DNA-directed RNA polymerase subunit alpha (Cronobacter sakazakii (strain ATCC BAA-894) (Enterobacter sakazakii)).